The sequence spans 48 residues: Small polypeptide DEVIL 22 (48 aa).

Residues 7–23 (KLNKGHAFTSKCASLVK) traverse the membrane as a helical segment. A required for DVL/RTFL small polypeptide activity region spans residues 13–44 (AFTSKCASLVKEQRARLYILRRCATMLCCWYI).

The protein belongs to the DVL/RTFL small polypeptides family.

It localises to the cell membrane. Small polypeptide acting as a regulatory molecule which coordinates cellular responses required for differentiation, growth and development, probably by restricting polar cell proliferation in lateral organs and coordinating socket cell recruitment and differentiation at trichome sites. In Arabidopsis thaliana (Mouse-ear cress), this protein is Small polypeptide DEVIL 22.